The primary structure comprises 472 residues: Glutamate--tRNA ligase (472 aa).

A 'HIGH' region motif is present at residues 9–19 (PSPTGPLHIGS). The 'KMSKS' region signature appears at 237–241 (KLSKR). Residue Lys-240 participates in ATP binding.

The protein belongs to the class-I aminoacyl-tRNA synthetase family. Glutamate--tRNA ligase type 1 subfamily. In terms of assembly, monomer.

Its subcellular location is the cytoplasm. It catalyses the reaction tRNA(Glu) + L-glutamate + ATP = L-glutamyl-tRNA(Glu) + AMP + diphosphate. In terms of biological role, catalyzes the attachment of glutamate to tRNA(Glu) in a two-step reaction: glutamate is first activated by ATP to form Glu-AMP and then transferred to the acceptor end of tRNA(Glu). The chain is Glutamate--tRNA ligase from Buchnera aphidicola subsp. Baizongia pistaciae (strain Bp).